Here is a 281-residue protein sequence, read N- to C-terminus: Bifunctional protein FolD (281 aa).

NADP(+) contacts are provided by residues 165-167 and Ser190; that span reads GRS.

This sequence belongs to the tetrahydrofolate dehydrogenase/cyclohydrolase family. Homodimer.

The catalysed reaction is (6R)-5,10-methylene-5,6,7,8-tetrahydrofolate + NADP(+) = (6R)-5,10-methenyltetrahydrofolate + NADPH. The enzyme catalyses (6R)-5,10-methenyltetrahydrofolate + H2O = (6R)-10-formyltetrahydrofolate + H(+). Its pathway is one-carbon metabolism; tetrahydrofolate interconversion. Functionally, catalyzes the oxidation of 5,10-methylenetetrahydrofolate to 5,10-methenyltetrahydrofolate and then the hydrolysis of 5,10-methenyltetrahydrofolate to 10-formyltetrahydrofolate. The sequence is that of Bifunctional protein FolD from Polaromonas sp. (strain JS666 / ATCC BAA-500).